Here is a 120-residue protein sequence, read N- to C-terminus: Chaperonin GroEL (120 aa).

D23–T27 is an ATP binding site.

Belongs to the chaperonin (HSP60) family. In terms of assembly, forms a cylinder of 14 subunits composed of two heptameric rings stacked back-to-back. Interacts with the co-chaperonin GroES.

It is found in the cytoplasm. It catalyses the reaction ATP + H2O + a folded polypeptide = ADP + phosphate + an unfolded polypeptide.. Together with its co-chaperonin GroES, plays an essential role in assisting protein folding. The GroEL-GroES system forms a nano-cage that allows encapsulation of the non-native substrate proteins and provides a physical environment optimized to promote and accelerate protein folding. In Mycobacterium gordonae, this protein is Chaperonin GroEL.